An 899-amino-acid polypeptide reads, in one-letter code: Probable disease resistance protein RXW24L (899 aa).

Residues 13–50 (DRLSQEYDQFKGVEDQVTELKSNLNLLKSFLKDADAKK) adopt a coiled-coil conformation. Positions 143 to 455 (LQERQREMRH…AEGISERRRY (313 aa)) constitute an NB-ARC domain. An ATP-binding site is contributed by 189 to 196 (GMGGLGKT).

Belongs to the disease resistance NB-LRR family.

Its function is as follows. Potential disease resistance protein. In Arabidopsis thaliana (Mouse-ear cress), this protein is Probable disease resistance protein RXW24L (RXW24L).